A 585-amino-acid polypeptide reads, in one-letter code: Arginine--tRNA ligase (585 aa).

Residues 131–141 (ANPTGPMHVGH) carry the 'HIGH' region motif.

The protein belongs to the class-I aminoacyl-tRNA synthetase family. Monomer.

It is found in the cytoplasm. The catalysed reaction is tRNA(Arg) + L-arginine + ATP = L-arginyl-tRNA(Arg) + AMP + diphosphate. The polypeptide is Arginine--tRNA ligase (Bartonella tribocorum (strain CIP 105476 / IBS 506)).